A 76-amino-acid polypeptide reads, in one-letter code: U-scoloptoxin(15)-Ssd3b (76 aa).

Positions 1-23 (MEKKIIFLCFLVALLTFPEFISS) are cleaved as a signal peptide.

In terms of processing, contains 2 disulfide bonds. As to expression, expressed by the venom gland.

The protein resides in the secreted. This Scolopendra dehaani (Thai centipede) protein is U-scoloptoxin(15)-Ssd3b.